Reading from the N-terminus, the 320-residue chain is Aspartate carbamoyltransferase catalytic subunit (320 aa).

R58 and T59 together coordinate carbamoyl phosphate. K86 lines the L-aspartate pocket. Residues R108, H136, and Q139 each contribute to the carbamoyl phosphate site. L-aspartate is bound by residues R169 and R223. The carbamoyl phosphate site is built by G264 and P265.

The protein belongs to the aspartate/ornithine carbamoyltransferase superfamily. ATCase family. In terms of assembly, heterododecamer (2C3:3R2) of six catalytic PyrB chains organized as two trimers (C3), and six regulatory PyrI chains organized as three dimers (R2).

The enzyme catalyses carbamoyl phosphate + L-aspartate = N-carbamoyl-L-aspartate + phosphate + H(+). It participates in pyrimidine metabolism; UMP biosynthesis via de novo pathway; (S)-dihydroorotate from bicarbonate: step 2/3. Functionally, catalyzes the condensation of carbamoyl phosphate and aspartate to form carbamoyl aspartate and inorganic phosphate, the committed step in the de novo pyrimidine nucleotide biosynthesis pathway. This chain is Aspartate carbamoyltransferase catalytic subunit, found in Cereibacter sphaeroides (strain ATCC 17025 / ATH 2.4.3) (Rhodobacter sphaeroides).